The following is a 270-amino-acid chain: tRNA pseudouridine synthase A (270 aa).

Residue Asp51 is the Nucleophile of the active site. A substrate-binding site is contributed by Tyr109.

The protein belongs to the tRNA pseudouridine synthase TruA family. Homodimer.

The catalysed reaction is uridine(38/39/40) in tRNA = pseudouridine(38/39/40) in tRNA. Its function is as follows. Formation of pseudouridine at positions 38, 39 and 40 in the anticodon stem and loop of transfer RNAs. In Burkholderia lata (strain ATCC 17760 / DSM 23089 / LMG 22485 / NCIMB 9086 / R18194 / 383), this protein is tRNA pseudouridine synthase A.